Reading from the N-terminus, the 631-residue chain is Glutamyl-tRNA(Gln) amidotransferase subunit E (631 aa).

Belongs to the GatB/GatE family. GatE subfamily. In terms of assembly, heterodimer of GatD and GatE.

The enzyme catalyses L-glutamyl-tRNA(Gln) + L-glutamine + ATP + H2O = L-glutaminyl-tRNA(Gln) + L-glutamate + ADP + phosphate + H(+). Allows the formation of correctly charged Gln-tRNA(Gln) through the transamidation of misacylated Glu-tRNA(Gln) in organisms which lack glutaminyl-tRNA synthetase. The reaction takes place in the presence of glutamine and ATP through an activated gamma-phospho-Glu-tRNA(Gln). The GatDE system is specific for glutamate and does not act on aspartate. This chain is Glutamyl-tRNA(Gln) amidotransferase subunit E, found in Methanococcus maripaludis (strain C5 / ATCC BAA-1333).